A 591-amino-acid polypeptide reads, in one-letter code: L-fucose isomerase (591 aa).

Active-site proton acceptor residues include Glu-337 and Asp-361. Positions 337, 361, and 528 each coordinate Mn(2+).

It belongs to the L-fucose isomerase family. In terms of assembly, homohexamer. Requires Mn(2+) as cofactor.

It is found in the cytoplasm. It carries out the reaction L-fucose = L-fuculose. The protein operates within carbohydrate degradation; L-fucose degradation; L-lactaldehyde and glycerone phosphate from L-fucose: step 1/3. Converts the aldose L-fucose into the corresponding ketose L-fuculose. The sequence is that of L-fucose isomerase from Klebsiella pneumoniae subsp. pneumoniae (strain ATCC 700721 / MGH 78578).